We begin with the raw amino-acid sequence, 322 residues long: GDSL esterase/lipase At5g03600 (322 aa).

Ser-21 functions as the Nucleophile in the catalytic mechanism. Catalysis depends on residues Asp-295 and His-298.

This sequence belongs to the 'GDSL' lipolytic enzyme family.

The polypeptide is GDSL esterase/lipase At5g03600 (Arabidopsis thaliana (Mouse-ear cress)).